Consider the following 236-residue polypeptide: N-alpha-acetyltransferase 40 (236 aa).

G2 carries N-myristoyl glycine lipidation. In terms of domain architecture, N-acetyltransferase spans 63-217; it reads SDLDQKTIDW…DCTYEILSKR (155 aa). Substrate is bound by residues Y85, 127 to 129, and Y138; that span reads DVE. Residues 140 to 142 and 148 to 153 each bind acetyl-CoA; these read VQL and RKGVGK. T174 is a binding site for substrate. N179 is a binding site for acetyl-CoA. Y211 is a substrate binding site.

It belongs to the acetyltransferase family. NAA40 subfamily.

The protein resides in the cytoplasm. It is found in the nucleus. It catalyses the reaction N-terminal L-seryl-[histone H4] + acetyl-CoA = N-terminal N(alpha)-acetyl-L-seryl-[histone H4] + CoA + H(+). The catalysed reaction is N-terminal L-seryl-[histone H2A] + acetyl-CoA = N-terminal N(alpha)-acetyl-L-seryl-[histone H2A] + CoA + H(+). In terms of biological role, N-alpha-acetyltransferase that specifically mediates the acetylation of the N-terminal residues of histones H4 and H2A. In contrast to other N-alpha-acetyltransferase, has a very specific selectivity for histones H4 and H2A N-terminus and specifically recognizes the 'Ser-Gly-Arg-Gly sequence'. The chain is N-alpha-acetyltransferase 40 (naa40) from Xenopus laevis (African clawed frog).